The following is a 219-amino-acid chain: MNISAAQVKDLREKTNAPMMDCKKALTEANGDIEQAIVILRKKGIASAAKKAARVTSEGSVVSYIHAGGKIGVLVEVNCESDFVARTEQFKELTHDIAMHIAASDPKFVRKEDVTPEYMEKEKEIYRDQAAKTGKPAPVIEKIVEGKMAKFYEEVCLLEQPFIKEQTISVGQLIATTIGKLGENISVKRFARFKVGDVGETVAISKASNEGEAEAPAAK.

The interval 81 to 84 (SDFV) is involved in Mg(2+) ion dislocation from EF-Tu.

This sequence belongs to the EF-Ts family.

It localises to the cytoplasm. In terms of biological role, associates with the EF-Tu.GDP complex and induces the exchange of GDP to GTP. It remains bound to the aminoacyl-tRNA.EF-Tu.GTP complex up to the GTP hydrolysis stage on the ribosome. The sequence is that of Elongation factor Ts from Koribacter versatilis (strain Ellin345).